The sequence spans 721 residues: Long-chain-fatty-acid--CoA ligase ACSBG1 (721 aa).

The disordered stretch occupies residues 1-64 (MPRSSEAGYC…SHGLELSAPE (64 aa)). Positions 26–43 (QQGASMGTSPDNSQTSSL) are enriched in polar residues. Phosphoserine is present on residues Ser-34, Ser-50, Ser-53, and Ser-70. ATP contacts are provided by residues 279 to 287 (TSGTTGNPK), 469 to 474 (AGYGLS), Asp-547, and Arg-562. Position 655 is a phosphotyrosine (Tyr-655). Residue Lys-698 participates in ATP binding.

The protein belongs to the ATP-dependent AMP-binding enzyme family. Bubblegum subfamily. As to expression, present in testis, at a lower level in brain, and at a very low level in ovary. Not detected in other tissues. tested. Present in Leydig cells of the adult testis and to a lesser degree in the seminiferous tubules in spermatogonia and Sertoli cells (at protein level).

The protein localises to the cytoplasm. Its subcellular location is the cytoplasmic vesicle. The protein resides in the microsome. It localises to the endoplasmic reticulum. It is found in the cell membrane. The catalysed reaction is a long-chain fatty acid + ATP + CoA = a long-chain fatty acyl-CoA + AMP + diphosphate. It catalyses the reaction (E)-hexadec-2-enoate + ATP + CoA = (2E)-hexadecenoyl-CoA + AMP + diphosphate. It carries out the reaction hexadecanoate + ATP + CoA = hexadecanoyl-CoA + AMP + diphosphate. In terms of biological role, catalyzes the conversion of fatty acids such as long-chain and very long-chain fatty acids to their active form acyl-CoAs for both synthesis of cellular lipids, and degradation via beta-oxidation. Can activate diverse saturated, monosaturated and polyunsaturated fatty acids. This Rattus norvegicus (Rat) protein is Long-chain-fatty-acid--CoA ligase ACSBG1.